A 105-amino-acid polypeptide reads, in one-letter code: Small ribosomal subunit protein eS25 (105 aa).

This sequence belongs to the eukaryotic ribosomal protein eS25 family. As to quaternary structure, component of the small ribosomal subunit. Mature ribosomes consist of a small (40S) and a large (60S) subunit. The 40S subunit contains about 32 different proteins and 1 molecule of RNA (18S). The 60S subunit contains 45 different proteins and 3 molecules of RNA (25S, 5.8S and 5S).

The protein localises to the cytoplasm. Its function is as follows. Component of the ribosome, a large ribonucleoprotein complex responsible for the synthesis of proteins in the cell. The small ribosomal subunit (SSU) binds messenger RNAs (mRNAs) and translates the encoded message by selecting cognate aminoacyl-transfer RNA (tRNA) molecules. The large subunit (LSU) contains the ribosomal catalytic site termed the peptidyl transferase center (PTC), which catalyzes the formation of peptide bonds, thereby polymerizing the amino acids delivered by tRNAs into a polypeptide chain. The nascent polypeptides leave the ribosome through a tunnel in the LSU and interact with protein factors that function in enzymatic processing, targeting, and the membrane insertion of nascent chains at the exit of the ribosomal tunnel. This Candida albicans (strain SC5314 / ATCC MYA-2876) (Yeast) protein is Small ribosomal subunit protein eS25 (RPS25B).